The sequence spans 2364 residues: Actin-binding protein F (2364 aa).

A compositionally biased stretch (low complexity) spans 138 to 157 (THQTSPTTETTTTPSSSSSS). Disordered regions lie at residues 138-168 (THQT…STLD), 1087-1111 (QASK…EKRR), 1412-1435 (NNNS…RAPM), and 1929-2088 (KLIS…SEFN). Over residues 1092–1111 (NESEVKDEKSMRNRQVEKRR) the composition is skewed to basic and acidic residues. Low complexity-rich tracts occupy residues 1412–1428 (NNNS…NSFG) and 1932–1960 (SSST…TTTD). The stretch at 1960–2017 (DSSKDKKKLEKEEKQREKERKQKEKEDKKREKEELKKKEKEEKKKKEEEKKLKKKSGS) forms a coiled coil. Over residues 1961–2010 (SSKDKKKLEKEEKQREKERKQKEKEDKKREKEELKKKEKEEKKKKEEEKK) the composition is skewed to basic and acidic residues. The segment covering 2027–2047 (ATPTTTTTTEATTTTTTTTAT) has biased composition (low complexity). The segment covering 2052 to 2070 (IKPEKIASDDEHDDHHHDE) has biased composition (basic and acidic residues). A compositionally biased stretch (acidic residues) spans 2071–2081 (HDEEDDDDEPL). The stretch at 2129 to 2173 (VQRWNSLFKDLRNKVDQVSNKDSVEIDYEKEIDRERRQNKMASNE) forms a coiled coil.

As to quaternary structure, interacts with actin.

Its subcellular location is the nucleus. It localises to the cytoplasm. The protein localises to the cytoskeleton. The polypeptide is Actin-binding protein F (abpF) (Dictyostelium discoideum (Social amoeba)).